Reading from the N-terminus, the 747-residue chain is Kinesin-like protein KIF3B (747 aa).

Position 1 is an N-acetylmethionine (Met1). Ser2 is modified (N-acetylserine; in Kinesin-like protein KIF3B, N-terminally processed). Positions 9–340 (SVRVVVRCRP…LRYANRAKNI (332 aa)) constitute a Kinesin motor domain. Residue 96-103 (GQTGTGKT) coordinates ATP. A coiled-coil region spans residues 346–579 (VNEDPKDALL…EQTQNELTRE (234 aa)). 2 disordered regions span residues 374-412 (IGRR…DKDD) and 698-747 (IQVD…LVPK). The span at 393-411 (GEEEEEEGEEGEEDGDDKD) shows a compositional bias: acidic residues. A globular region spans residues 580 to 747 (LKLKHLIIEN…YPQSRGLVPK (168 aa)). The segment covering 701–710 (DASSFESTAS) has biased composition (polar residues). Over residues 711 to 721 (RKPKARPKSGR) the composition is skewed to basic residues. Positions 722 to 735 (KSGSSSSSSGNPAS) are enriched in low complexity.

The protein belongs to the TRAFAC class myosin-kinesin ATPase superfamily. Kinesin family. Kinesin II subfamily. As to quaternary structure, heterodimer of KIF3A and KIF3B. KIF3A/KIF3B heterodimer interacts with KIFAP3 forming a heterotrimeric (KIF3A/KIF3B/KIFAP3) complex. Interacts with the SMC3 subunit of the cohesin complex. Interacts directly with IFT20. Interacts with FLCN.

Its subcellular location is the cytoplasm. The protein localises to the cytoskeleton. The protein resides in the cell projection. It localises to the cilium. It is found in the dendritic spine. Functionally, microtubule-based molecular motor that transport intracellular cargos, such as vesicles, organelles and protein complexes. Uses ATP hydrolysis to generate force to bind and move along the microtubule. Plays a role in cilia formation. Involved in photoreceptor integrity and opsin trafficking in rod photoreceptors. Transports vesicles containing N-methyl-D-aspartate (NMDA) receptor subunit GRIN2A into neuronal dendrites. This chain is Kinesin-like protein KIF3B, found in Mus musculus (Mouse).